The following is a 343-amino-acid chain: Follistatin (343 aa).

Residues 1–28 form the signal peptide; the sequence is MLNQRIHPGMLVLLMFLYHFMEDHTAQA. A TB domain is found at 29–102; the sequence is GNCWLRQARN…TCENVDCGPG (74 aa). 8 cysteine pairs are disulfide-bonded: cysteine 31-cysteine 54, cysteine 41-cysteine 87, cysteine 55-cysteine 90, cysteine 94-cysteine 105, cysteine 99-cysteine 115, cysteine 117-cysteine 149, cysteine 121-cysteine 142, and cysteine 131-cysteine 163. In terms of domain architecture, Follistatin-like 1 spans 93–116; sequence TCENVDCGPGKKCKMNKKNKPRCV. Kazal-like domains follow at residues 99–165, 185–240, and 263–317; these read CGPG…KCKK, NAYC…KCIK, and RGRC…SCNS. Asparagine 123 is a glycosylation site (N-linked (GlcNAc...) asparagine). Residues 166–189 enclose the Follistatin-like 2 domain; that stretch reads TCRDVLCPGSSTCVVDQTNNAYCV. Disulfide bonds link cysteine 191–cysteine 224, cysteine 195–cysteine 217, and cysteine 206–cysteine 238. The Follistatin-like 3 domain maps to 243–267; it reads SCEDIQCSAGKKCLWDFKVGRGRCA. 3 disulfides stabilise this stretch: cysteine 269/cysteine 301, cysteine 273/cysteine 294, and cysteine 283/cysteine 315. An N-linked (GlcNAc...) asparagine glycan is attached at asparagine 287. Residues 315 to 343 form a disordered region; it reads CNSINEDPEEEEEDEDQDYSFPISSILEW. Acidic residues predominate over residues 320-332; that stretch reads EDPEEEEEDEDQD.

Monomer. As to expression, ciliary ganglion neurons. Levels are higher in the iris than the choroid.

It is found in the secreted. Its function is as follows. Binds directly to activin and functions as an activin antagonist. Inhibits activin A signaling in the iris and regulates somatostatin phenotype in ciliary ganglion neurons. Specific inhibitor of the biosynthesis and secretion of pituitary follicle stimulating hormone (FSH). The polypeptide is Follistatin (FST) (Gallus gallus (Chicken)).